A 315-amino-acid polypeptide reads, in one-letter code: MQIKLANPRGFCAGVDRAIEIVNRALEVFGPPIYVRHEVVHNKFVVEDLRNRGAIFVEELDQVPDDVIVIFSAHGVSQAVRQEAAGRGLKVFDATCPLVTKVHIEVAKYSRDGRECILIGHEGHPEVEGTMGQYDASNGGAIYLVEDEEDVANLQVRDPNHLAFVTQTTLSMDDTSRVIDALRARFPNIGGPRKDDICYATQNRQDAVKQLAGESDVVLVVGSPNSSNSNRLRELAERMGTPAYLIDGAEDMQRGWFDQTARIGITAGASAPEVLVRGVIEQLKAWGATGAEELDGREENITFSMPKELRVRSLI.

Position 12 (Cys12) interacts with [4Fe-4S] cluster. (2E)-4-hydroxy-3-methylbut-2-enyl diphosphate-binding residues include His41 and His74. 2 residues coordinate dimethylallyl diphosphate: His41 and His74. Residues His41 and His74 each coordinate isopentenyl diphosphate. Cys96 is a [4Fe-4S] cluster binding site. His124 is a binding site for (2E)-4-hydroxy-3-methylbut-2-enyl diphosphate. His124 is a dimethylallyl diphosphate binding site. Position 124 (His124) interacts with isopentenyl diphosphate. Catalysis depends on Glu126, which acts as the Proton donor. Position 168 (Thr168) interacts with (2E)-4-hydroxy-3-methylbut-2-enyl diphosphate. Position 198 (Cys198) interacts with [4Fe-4S] cluster. The (2E)-4-hydroxy-3-methylbut-2-enyl diphosphate site is built by Ser226, Ser227, Asn228, and Ser270. 4 residues coordinate dimethylallyl diphosphate: Ser226, Ser227, Asn228, and Ser270. Isopentenyl diphosphate-binding residues include Ser226, Ser227, Asn228, and Ser270.

Belongs to the IspH family. [4Fe-4S] cluster serves as cofactor.

It carries out the reaction isopentenyl diphosphate + 2 oxidized [2Fe-2S]-[ferredoxin] + H2O = (2E)-4-hydroxy-3-methylbut-2-enyl diphosphate + 2 reduced [2Fe-2S]-[ferredoxin] + 2 H(+). It catalyses the reaction dimethylallyl diphosphate + 2 oxidized [2Fe-2S]-[ferredoxin] + H2O = (2E)-4-hydroxy-3-methylbut-2-enyl diphosphate + 2 reduced [2Fe-2S]-[ferredoxin] + 2 H(+). It functions in the pathway isoprenoid biosynthesis; dimethylallyl diphosphate biosynthesis; dimethylallyl diphosphate from (2E)-4-hydroxy-3-methylbutenyl diphosphate: step 1/1. Its pathway is isoprenoid biosynthesis; isopentenyl diphosphate biosynthesis via DXP pathway; isopentenyl diphosphate from 1-deoxy-D-xylulose 5-phosphate: step 6/6. Catalyzes the conversion of 1-hydroxy-2-methyl-2-(E)-butenyl 4-diphosphate (HMBPP) into a mixture of isopentenyl diphosphate (IPP) and dimethylallyl diphosphate (DMAPP). Acts in the terminal step of the DOXP/MEP pathway for isoprenoid precursor biosynthesis. This chain is 4-hydroxy-3-methylbut-2-enyl diphosphate reductase, found in Pseudomonas putida (strain ATCC 700007 / DSM 6899 / JCM 31910 / BCRC 17059 / LMG 24140 / F1).